We begin with the raw amino-acid sequence, 391 residues long: Somatostatin receptor type 1 (391 aa).

The interval 1-50 (MFPNGTAPSPTSSPSSSPGGCGEGVCSRGPGSGAADGMEEPGRNSSQNGT) is disordered. Residues 1-56 (MFPNGTAPSPTSSPSSSPGGCGEGVCSRGPGSGAADGMEEPGRNSSQNGTLSEGQG) are Extracellular-facing. N-linked (GlcNAc...) asparagine glycosylation occurs at asparagine 4. Positions 8-18 (PSPTSSPSSSP) are enriched in low complexity. N-linked (GlcNAc...) asparagine glycosylation is found at asparagine 44 and asparagine 48. A helical membrane pass occupies residues 57–84 (SAILISFIYSVVCLVGLCGNSMVIYVIL). Residues 85–94 (RYAKMKTATN) lie on the Cytoplasmic side of the membrane. The helical transmembrane segment at 95 to 120 (IYILNLAIADELLMLSVPFLVTSTLL) threads the bilayer. The Extracellular portion of the chain corresponds to 121 to 131 (RHWPFGALLCR). A disulfide bridge links cysteine 130 with cysteine 208. Residues 132–153 (LVLSVDAVNMFTSIYCLTVLSV) form a helical membrane-spanning segment. The Cytoplasmic portion of the chain corresponds to 154 to 175 (DRYVAVVHPIKAARYRRPTVAK). The helical transmembrane segment at 176–196 (VVNLGVWVLSLLVILPIVVFS) threads the bilayer. Topologically, residues 197–219 (RTAANSDGTVACNMLMPEPAQRW) are extracellular. Residues 220–244 (LVGFVLYTFLMGFLLPVGAICLCYV) traverse the membrane as a helical segment. The Cytoplasmic segment spans residues 245–270 (LIIAKMRMVALKAGWQQRKRSERKIT). Residues 271–296 (LMVMMVVMVFVICWMPFYVVQLVNVF) traverse the membrane as a helical segment. The Extracellular portion of the chain corresponds to 297 to 303 (AEQDDAT). Residues 304-327 (VSQLSVILGYANSCANPILYGFLS) traverse the membrane as a helical segment. Topologically, residues 328 to 391 (DNFKRSFQRI…GTCASRISTL (64 aa)) are cytoplasmic. Cysteine 339 is lipidated: S-palmitoyl cysteine.

This sequence belongs to the G-protein coupled receptor 1 family. In terms of tissue distribution, brain, pituitary, islet, jejunum, stomach, heart, spleen.

Its subcellular location is the cell membrane. Functionally, receptor for somatostatin with higher affinity for somatostatin-14 than -28. This receptor is coupled to phosphotyrosine phosphatase and Na(+)/H(+) exchanger via pertussis toxin insensitive G proteins. The chain is Somatostatin receptor type 1 (Sstr1) from Rattus norvegicus (Rat).